The chain runs to 232 residues: Chromosome partition protein MukE (232 aa).

The segment at 203-232 is disordered; the sequence is HTKEPSQGSLLSEEDQEEQAQEEMTEEGEA. A compositionally biased stretch (acidic residues) spans 214–232; sequence SEEDQEEQAQEEMTEEGEA.

Belongs to the MukE family. In terms of assembly, interacts, and probably forms a ternary complex, with MukF and MukB. The complex formation is stimulated by calcium or magnesium.

The protein localises to the cytoplasm. The protein resides in the nucleoid. Functionally, involved in chromosome condensation, segregation and cell cycle progression. May participate in facilitating chromosome segregation by condensation DNA from both sides of a centrally located replisome during cell division. Probably acts via its interaction with MukB and MukF. In Vibrio parahaemolyticus serotype O3:K6 (strain RIMD 2210633), this protein is Chromosome partition protein MukE.